A 458-amino-acid chain; its full sequence is Argininosuccinate lyase (458 aa).

This sequence belongs to the lyase 1 family. Argininosuccinate lyase subfamily.

The protein localises to the cytoplasm. The catalysed reaction is 2-(N(omega)-L-arginino)succinate = fumarate + L-arginine. It participates in amino-acid biosynthesis; L-arginine biosynthesis; L-arginine from L-ornithine and carbamoyl phosphate: step 3/3. The protein is Argininosuccinate lyase of Bacillus velezensis (strain DSM 23117 / BGSC 10A6 / LMG 26770 / FZB42) (Bacillus amyloliquefaciens subsp. plantarum).